The following is a 513-amino-acid chain: Histidine ammonia-lyase (513 aa).

The 5-imidazolinone (Ala-Gly) cross-link spans Ala-146–Gly-148. At Ser-147 the chain carries 2,3-didehydroalanine (Ser).

This sequence belongs to the PAL/histidase family. Contains an active site 4-methylidene-imidazol-5-one (MIO), which is formed autocatalytically by cyclization and dehydration of residues Ala-Ser-Gly.

The protein resides in the cytoplasm. It carries out the reaction L-histidine = trans-urocanate + NH4(+). It functions in the pathway amino-acid degradation; L-histidine degradation into L-glutamate; N-formimidoyl-L-glutamate from L-histidine: step 1/3. The polypeptide is Histidine ammonia-lyase (Caulobacter vibrioides (strain NA1000 / CB15N) (Caulobacter crescentus)).